Reading from the N-terminus, the 212-residue chain is Imidazole glycerol phosphate synthase subunit HisH 2 (212 aa).

Positions 3-212 constitute a Glutamine amidotransferase type-1 domain; the sequence is RVAIIDYGIN…LMSNFLQWNP (210 aa). The active-site Nucleophile is the Cys-82. Residues His-192 and Glu-194 contribute to the active site.

In terms of assembly, heterodimer of HisH and HisF.

It localises to the cytoplasm. The enzyme catalyses 5-[(5-phospho-1-deoxy-D-ribulos-1-ylimino)methylamino]-1-(5-phospho-beta-D-ribosyl)imidazole-4-carboxamide + L-glutamine = D-erythro-1-(imidazol-4-yl)glycerol 3-phosphate + 5-amino-1-(5-phospho-beta-D-ribosyl)imidazole-4-carboxamide + L-glutamate + H(+). It carries out the reaction L-glutamine + H2O = L-glutamate + NH4(+). Its pathway is amino-acid biosynthesis; L-histidine biosynthesis; L-histidine from 5-phospho-alpha-D-ribose 1-diphosphate: step 5/9. IGPS catalyzes the conversion of PRFAR and glutamine to IGP, AICAR and glutamate. The HisH subunit provides the glutamine amidotransferase activity that produces the ammonia necessary to HisF for the synthesis of IGP and AICAR. The sequence is that of Imidazole glycerol phosphate synthase subunit HisH 2 from Nitrobacter winogradskyi (strain ATCC 25391 / DSM 10237 / CIP 104748 / NCIMB 11846 / Nb-255).